Here is a 289-residue protein sequence, read N- to C-terminus: Oxaloacetate decarboxylase (289 aa).

Ser50 is a binding site for substrate. Asp88 is a Mg(2+) binding site. Arg159 and His235 together coordinate substrate.

It belongs to the isocitrate lyase family. Oxaloacetate decarboxylase subfamily. As to quaternary structure, homotetramer; dimer of dimers. Requires Mg(2+) as cofactor.

The enzyme catalyses oxaloacetate + H(+) = pyruvate + CO2. Its function is as follows. Catalyzes the decarboxylation of oxaloacetate into pyruvate. Seems to play a role in maintaining cellular concentrations of bicarbonate and pyruvate. The protein is Oxaloacetate decarboxylase of Pseudomonas fluorescens (strain SBW25).